The sequence spans 421 residues: MKFSTAIIVSFLFIADFCAAQSGVLDISKFGGKPNSDIGQALTSAWNEACASTTAAKIVIPAGTYQLNGIELKGPCKAPIELQVDGTIQAPADPSVIKGTEQWFKFLYMDHLTLSGKGVFDGQGATVYKKAAPASAWSGKNSNSKVFMNFGFNFVNNSIVRGVTSKDSKNFHVMVFGCKNITFDGFTITAPGDSPNTDGIHMGKSTDVKILNTNIGTGDDCVSIGDGSKQITVQGVNCGPGHGLSVGSLGKFTTEENVEGITVKNCTLTATDNGVRIKTWPDAPGTITVSDIHFEDITMTNVKNPVIIDQEYYPWNQCSKKNPSKIKLSKISFKNVKGTSGTAEGVVLICSSAVPCDGVELNNVDLKFNGAPTTAKCTNVKPLVTGTAPVCQAPGAPAASTTATPAASKTATPAAGKSPAK.

The first 20 residues, 1–20 (MKFSTAIIVSFLFIADFCAA), serve as a signal peptide directing secretion. N-linked (GlcNAc...) asparagine glycosylation is found at Asn-156 and Asn-180. PbH1 repeat units follow at residues 178 to 204 (CKNI…HMGK) and 205 to 226 (STDV…SIGD). Catalysis depends on Asp-219, which acts as the Proton donor. His-242 is an active-site residue. PbH1 repeat units lie at residues 258-279 (VEGI…RIKT) and 289-310 (VSDI…IIDQ). Residue Asn-265 is glycosylated (N-linked (GlcNAc...) asparagine). A disordered region spans residues 394–421 (PGAPAASTTATPAASKTATPAAGKSPAK).

It belongs to the glycosyl hydrolase 28 family. In terms of tissue distribution, pollen specific.

It is found in the secreted. The protein localises to the cell wall. It carries out the reaction (1,4-alpha-D-galacturonosyl)n+m + H2O = (1,4-alpha-D-galacturonosyl)n + (1,4-alpha-D-galacturonosyl)m.. In terms of biological role, may function in the depolymerization of the pectin in its walls during pollen tube elongation, or in that of the pistil during pollination. This Medicago sativa (Alfalfa) protein is Polygalacturonase.